The primary structure comprises 121 residues: UPF0738 protein BPUM_1088 (121 aa).

It belongs to the UPF0738 family.

The protein is UPF0738 protein BPUM_1088 of Bacillus pumilus (strain SAFR-032).